The chain runs to 202 residues: LexA repressor 2 (202 aa).

Positions 28–48 (LADIATRFGFASRSVARKHIT) form a DNA-binding region, H-T-H motif. Active-site for autocatalytic cleavage activity residues include Ser123 and Lys160.

Belongs to the peptidase S24 family. Homodimer.

The enzyme catalyses Hydrolysis of Ala-|-Gly bond in repressor LexA.. Its function is as follows. Represses a number of genes involved in the response to DNA damage (SOS response), including recA and lexA. In the presence of single-stranded DNA, RecA interacts with LexA causing an autocatalytic cleavage which disrupts the DNA-binding part of LexA, leading to derepression of the SOS regulon and eventually DNA repair. The sequence is that of LexA repressor 2 from Pseudomonas putida (strain ATCC 47054 / DSM 6125 / CFBP 8728 / NCIMB 11950 / KT2440).